A 221-amino-acid polypeptide reads, in one-letter code: Thiamine-phosphate synthase (221 aa).

4-amino-2-methyl-5-(diphosphooxymethyl)pyrimidine contacts are provided by residues 39-43 (QLRCK) and asparagine 76. Aspartate 77 and aspartate 96 together coordinate Mg(2+). Residue serine 114 coordinates 4-amino-2-methyl-5-(diphosphooxymethyl)pyrimidine. 140–142 (TPT) contacts 2-[(2R,5Z)-2-carboxy-4-methylthiazol-5(2H)-ylidene]ethyl phosphate. Lysine 143 is a binding site for 4-amino-2-methyl-5-(diphosphooxymethyl)pyrimidine. A 2-[(2R,5Z)-2-carboxy-4-methylthiazol-5(2H)-ylidene]ethyl phosphate-binding site is contributed by glycine 171.

The protein belongs to the thiamine-phosphate synthase family. The cofactor is Mg(2+).

The catalysed reaction is 2-[(2R,5Z)-2-carboxy-4-methylthiazol-5(2H)-ylidene]ethyl phosphate + 4-amino-2-methyl-5-(diphosphooxymethyl)pyrimidine + 2 H(+) = thiamine phosphate + CO2 + diphosphate. The enzyme catalyses 2-(2-carboxy-4-methylthiazol-5-yl)ethyl phosphate + 4-amino-2-methyl-5-(diphosphooxymethyl)pyrimidine + 2 H(+) = thiamine phosphate + CO2 + diphosphate. It catalyses the reaction 4-methyl-5-(2-phosphooxyethyl)-thiazole + 4-amino-2-methyl-5-(diphosphooxymethyl)pyrimidine + H(+) = thiamine phosphate + diphosphate. The protein operates within cofactor biosynthesis; thiamine diphosphate biosynthesis; thiamine phosphate from 4-amino-2-methyl-5-diphosphomethylpyrimidine and 4-methyl-5-(2-phosphoethyl)-thiazole: step 1/1. Condenses 4-methyl-5-(beta-hydroxyethyl)thiazole monophosphate (THZ-P) and 2-methyl-4-amino-5-hydroxymethyl pyrimidine pyrophosphate (HMP-PP) to form thiamine monophosphate (TMP). This chain is Thiamine-phosphate synthase, found in Deinococcus geothermalis (strain DSM 11300 / CIP 105573 / AG-3a).